A 231-amino-acid polypeptide reads, in one-letter code: Large ribosomal subunit protein uL1 (231 aa).

Belongs to the universal ribosomal protein uL1 family. In terms of assembly, part of the 50S ribosomal subunit.

Binds directly to 23S rRNA. The L1 stalk is quite mobile in the ribosome, and is involved in E site tRNA release. Functionally, protein L1 is also a translational repressor protein, it controls the translation of the L11 operon by binding to its mRNA. In Staphylococcus carnosus (strain TM300), this protein is Large ribosomal subunit protein uL1.